The primary structure comprises 355 residues: Holliday junction branch migration complex subunit RuvB (355 aa).

Residues 1–26 (MSIQTDDFASSSPAARRVVSTAPASP) are disordered. Positions 5-196 (TDDFASSSPA…FGIVARLEFY (192 aa)) are large ATPase domain (RuvB-L). Low complexity predominate over residues 9–22 (ASSSPAARRVVSTA). ATP-binding positions include L35, R36, G77, K80, T81, T82, 143-145 (EDY), R186, Y196, and R233. Position 81 (T81) interacts with Mg(2+). Residues 197–267 (SVEELARIVT…IADKALAMLD (71 aa)) form a small ATPAse domain (RuvB-S) region. The tract at residues 270–355 (PQGFDVMDRK…TTSGSELFDA (86 aa)) is head domain (RuvB-H). The DNA site is built by R325 and R330.

The protein belongs to the RuvB family. Homohexamer. Forms an RuvA(8)-RuvB(12)-Holliday junction (HJ) complex. HJ DNA is sandwiched between 2 RuvA tetramers; dsDNA enters through RuvA and exits via RuvB. An RuvB hexamer assembles on each DNA strand where it exits the tetramer. Each RuvB hexamer is contacted by two RuvA subunits (via domain III) on 2 adjacent RuvB subunits; this complex drives branch migration. In the full resolvosome a probable DNA-RuvA(4)-RuvB(12)-RuvC(2) complex forms which resolves the HJ.

The protein localises to the cytoplasm. It carries out the reaction ATP + H2O = ADP + phosphate + H(+). In terms of biological role, the RuvA-RuvB-RuvC complex processes Holliday junction (HJ) DNA during genetic recombination and DNA repair, while the RuvA-RuvB complex plays an important role in the rescue of blocked DNA replication forks via replication fork reversal (RFR). RuvA specifically binds to HJ cruciform DNA, conferring on it an open structure. The RuvB hexamer acts as an ATP-dependent pump, pulling dsDNA into and through the RuvAB complex. RuvB forms 2 homohexamers on either side of HJ DNA bound by 1 or 2 RuvA tetramers; 4 subunits per hexamer contact DNA at a time. Coordinated motions by a converter formed by DNA-disengaged RuvB subunits stimulates ATP hydrolysis and nucleotide exchange. Immobilization of the converter enables RuvB to convert the ATP-contained energy into a lever motion, pulling 2 nucleotides of DNA out of the RuvA tetramer per ATP hydrolyzed, thus driving DNA branch migration. The RuvB motors rotate together with the DNA substrate, which together with the progressing nucleotide cycle form the mechanistic basis for DNA recombination by continuous HJ branch migration. Branch migration allows RuvC to scan DNA until it finds its consensus sequence, where it cleaves and resolves cruciform DNA. The protein is Holliday junction branch migration complex subunit RuvB of Methylibium petroleiphilum (strain ATCC BAA-1232 / LMG 22953 / PM1).